The following is a 295-amino-acid chain: MRNRIEQALQQMPASFAPYLRELVLAKDFDATFSAEQYQQLLTLSGMEDSDLRVALLPIAAAYSYAPISEFYVGAIVRGISGRLYLGANMEFTGAQLGQTVHAEQCAISHAWMKGEKGVADITINFSPCGHCRQFMNELTTASSLKIQLPKRAAKTLQEYLPESFGPADLGIDSGLMSPVNHGKTSDDDEELIQQALRAMNISHSPYTQNFSGVALKMRSGAIYLGAYAENAAFNPSLPPLQVALAQAMMMGESFEDIEAAALVESATGKISHLADTQATLEVINPDIPLSYLSL.

2 consecutive CMP/dCMP-type deaminase domains span residues 48-168 (EDSD…FGPA) and 187-295 (DDDE…YLSL). Position 89 to 91 (89 to 91 (NME)) interacts with substrate. His102 contacts Zn(2+). Glu104 acts as the Proton donor in catalysis. Positions 129 and 132 each coordinate Zn(2+).

This sequence belongs to the cytidine and deoxycytidylate deaminase family. In terms of assembly, homodimer. Zn(2+) serves as cofactor.

It carries out the reaction cytidine + H2O + H(+) = uridine + NH4(+). It catalyses the reaction 2'-deoxycytidine + H2O + H(+) = 2'-deoxyuridine + NH4(+). Its function is as follows. This enzyme scavenges exogenous and endogenous cytidine and 2'-deoxycytidine for UMP synthesis. The chain is Cytidine deaminase from Vibrio cholerae serotype O1 (strain ATCC 39541 / Classical Ogawa 395 / O395).